A 427-amino-acid chain; its full sequence is Homeobox protein knotted-1-like 3 (427 aa).

2 disordered regions span residues 19–49 and 272–291; these read QTHH…QPAP and TGVS…EDDQ. Polar residues predominate over residues 272-284; it reads TGVSPGEGTSATM. The 21-residue stretch at 330–350 folds into the ELK domain; sequence ELKHELKQGYKEKIVDIREEI. Positions 351 to 414 form a DNA-binding region, homeobox; TALE-type; sequence LRKRRAGKLP…NQRKRNWHSN (64 aa).

Belongs to the TALE/KNOX homeobox family. Maximally expressed in sepals, petals and fully expanded leaves. Also expressed in other flower organs and in developing leaves. Low level expression in stem internodes.

The protein localises to the nucleus. The polypeptide is Homeobox protein knotted-1-like 3 (Malus domestica (Apple)).